Reading from the N-terminus, the 470-residue chain is Cytochrome P450 monooxygenase FUM2 (470 aa).

Heme is bound at residue cysteine 414.

Belongs to the cytochrome P450 family. Requires heme as cofactor.

It participates in mycotoxin biosynthesis. In terms of biological role, cytochrome P450 monooxygenase; part of the gene cluster that mediates the biosynthesis of fumonisins B1 (FB1), B2 (FB2), B3 (FB3), and B4 (FB4), which are carcinogenic mycotoxins. Within the pathway, FUM2 performs the C-10 hydroxylation present in FB2 and FB4 and which occurs early in the biosynthesis. The biosynthesis starts with the FUM1-catalyzed carbon chain assembly from one molecule of acetyl-CoA, eight molecules of malonyl-CoA, and two molecules of methionine (in S-adenosyl form). The C18 polyketide chain is released from the enzyme by a nucleophilic attack of a carbanion, which is derived from R-carbon of alanine by decarboxylation, on the carbonyl carbon of polyketide acyl chain. This step is catalyzed by the pyridoxal 5'-phosphate-dependent aminoacyl transferase FUM8. The resultant 3-keto intermediate is then stereospecifically reduced to a 3-hydroxyl product by reductase FUM13. Subsequent oxidations at C-10 by the cytochrome P450 monooxygenase FUM2, C-14 and C-15 by FUM6, FUM12 or FUM15, tricarballylic esterification of the hydroxyl groups on C-14 and C-15 by acyltransferase FUM14, and C-5 hydroxylation by 2-keto-glutarate-dependent dioxygenase FUM3 furnish the biosynthesis of fumonisins. The tricarballylic moieties are most likely derived from the citric acid cycle, and their addition to the carbon backbone may involve FUM7, FUM10, FUM11 and FUM14. In Gibberella moniliformis (strain M3125 / FGSC 7600) (Maize ear and stalk rot fungus), this protein is Cytochrome P450 monooxygenase FUM2.